The sequence spans 276 residues: Cis-2,3-dihydrobiphenyl-2,3-diol dehydrogenase (276 aa).

9 to 33 contacts NAD(+); it reads LVTGGGSGLGRAIVDRFVAEGARVA. Ser-142 is a substrate binding site. Tyr-155 functions as the Proton acceptor in the catalytic mechanism.

It belongs to the short-chain dehydrogenases/reductases (SDR) family.

It catalyses the reaction (2R,3S)-3-phenylcyclohexa-3,5-diene-1,2-diol + NAD(+) = biphenyl-2,3-diol + NADH + H(+). Its pathway is xenobiotic degradation; biphenyl degradation; 2-hydroxy-2,4-pentadienoate and benzoate from biphenyl: step 2/4. This Pseudomonas sp. (strain KKS102) protein is Cis-2,3-dihydrobiphenyl-2,3-diol dehydrogenase (bphB).